Reading from the N-terminus, the 269-residue chain is Tryptophan synthase alpha chain (269 aa).

Active-site proton acceptor residues include Glu49 and Asp60.

Belongs to the TrpA family. As to quaternary structure, tetramer of two alpha and two beta chains.

It carries out the reaction (1S,2R)-1-C-(indol-3-yl)glycerol 3-phosphate + L-serine = D-glyceraldehyde 3-phosphate + L-tryptophan + H2O. It functions in the pathway amino-acid biosynthesis; L-tryptophan biosynthesis; L-tryptophan from chorismate: step 5/5. In terms of biological role, the alpha subunit is responsible for the aldol cleavage of indoleglycerol phosphate to indole and glyceraldehyde 3-phosphate. The polypeptide is Tryptophan synthase alpha chain (Photobacterium profundum (strain SS9)).